The chain runs to 465 residues: Myosin-6 (465 aa).

In terms of domain architecture, Myosin motor spans Ile-1–Pro-35. The stretch at Leu-36–Arg-465 forms a coiled coil. A phosphoserine mark is found at Ser-285 and Ser-334. Tyr-456 bears the Phosphotyrosine mark.

As to quaternary structure, muscle myosin is a hexameric protein that consists of 2 heavy chain subunits (MHC), 2 alkali light chain subunits (MLC) and 2 regulatory light chain subunits (MLC-2).

It localises to the cytoplasm. It is found in the myofibril. Muscle contraction. This Oryctolagus cuniculus (Rabbit) protein is Myosin-6 (MYH6).